The sequence spans 274 residues: MSTGWHAELELRFEHNREVTRLMRRRHVGPLAVQQPFYPEKDGSAHVYLLHPPGGVAGDDVLDISCFLGRGARAVLTTPGATKFYRSERGQSTQTTRIDVGEGGICEYLPQETIVFDGAKASIGTKVFLSGDAVYLGWDIISLGRPACQESFDTGEVRQRIEIFRDGKPIWFEQFRLHGADPALNAAFAFCAKPIVATMVYAGPADESALHAIREAVGDAARNLFSVSRLERVIVCRYLGGRMSEAKTLFRKAWEVLRETGLGKPAAAPRIWAT.

It belongs to the UreD family. As to quaternary structure, ureD, UreF and UreG form a complex that acts as a GTP-hydrolysis-dependent molecular chaperone, activating the urease apoprotein by helping to assemble the nickel containing metallocenter of UreC. The UreE protein probably delivers the nickel.

The protein resides in the cytoplasm. Functionally, required for maturation of urease via the functional incorporation of the urease nickel metallocenter. The polypeptide is Urease accessory protein UreD 2 (Brucella anthropi (strain ATCC 49188 / DSM 6882 / CCUG 24695 / JCM 21032 / LMG 3331 / NBRC 15819 / NCTC 12168 / Alc 37) (Ochrobactrum anthropi)).